A 600-amino-acid polypeptide reads, in one-letter code: Proline--tRNA ligase (600 aa).

This sequence belongs to the class-II aminoacyl-tRNA synthetase family. ProS type 1 subfamily. As to quaternary structure, homodimer.

Its subcellular location is the cytoplasm. It carries out the reaction tRNA(Pro) + L-proline + ATP = L-prolyl-tRNA(Pro) + AMP + diphosphate. Its function is as follows. Catalyzes the attachment of proline to tRNA(Pro) in a two-step reaction: proline is first activated by ATP to form Pro-AMP and then transferred to the acceptor end of tRNA(Pro). As ProRS can inadvertently accommodate and process non-cognate amino acids such as alanine and cysteine, to avoid such errors it has two additional distinct editing activities against alanine. One activity is designated as 'pretransfer' editing and involves the tRNA(Pro)-independent hydrolysis of activated Ala-AMP. The other activity is designated 'posttransfer' editing and involves deacylation of mischarged Ala-tRNA(Pro). The misacylated Cys-tRNA(Pro) is not edited by ProRS. This is Proline--tRNA ligase from Prochlorococcus marinus (strain MIT 9215).